Consider the following 612-residue polypeptide: Dihydroxy-acid dehydratase (612 aa).

Aspartate 81 contacts Mg(2+). Cysteine 122 contributes to the [2Fe-2S] cluster binding site. Positions 123 and 124 each coordinate Mg(2+). An N6-carboxylysine modification is found at lysine 124. Residue cysteine 195 coordinates [2Fe-2S] cluster. Mg(2+) is bound at residue glutamate 491. Serine 517 acts as the Proton acceptor in catalysis.

Belongs to the IlvD/Edd family. As to quaternary structure, homodimer. [2Fe-2S] cluster is required as a cofactor. It depends on Mg(2+) as a cofactor.

The catalysed reaction is (2R)-2,3-dihydroxy-3-methylbutanoate = 3-methyl-2-oxobutanoate + H2O. It carries out the reaction (2R,3R)-2,3-dihydroxy-3-methylpentanoate = (S)-3-methyl-2-oxopentanoate + H2O. It functions in the pathway amino-acid biosynthesis; L-isoleucine biosynthesis; L-isoleucine from 2-oxobutanoate: step 3/4. It participates in amino-acid biosynthesis; L-valine biosynthesis; L-valine from pyruvate: step 3/4. In terms of biological role, functions in the biosynthesis of branched-chain amino acids. Catalyzes the dehydration of (2R,3R)-2,3-dihydroxy-3-methylpentanoate (2,3-dihydroxy-3-methylvalerate) into 2-oxo-3-methylpentanoate (2-oxo-3-methylvalerate) and of (2R)-2,3-dihydroxy-3-methylbutanoate (2,3-dihydroxyisovalerate) into 2-oxo-3-methylbutanoate (2-oxoisovalerate), the penultimate precursor to L-isoleucine and L-valine, respectively. This is Dihydroxy-acid dehydratase from Rhizobium leguminosarum bv. trifolii (strain WSM2304).